The primary structure comprises 252 residues: Ubiquinone biosynthesis protein COQ4 homolog 2, mitochondrial (252 aa).

The Zn(2+) site is built by histidine 130, aspartate 131, histidine 134, and glutamate 146.

The protein belongs to the COQ4 family. Component of a multi-subunit COQ enzyme complex. The cofactor is Zn(2+).

It is found in the mitochondrion inner membrane. It catalyses the reaction a 4-hydroxy-3-methoxy-5-(all-trans-polyprenyl)benzoate + H(+) = a 2-methoxy-6-(all-trans-polyprenyl)phenol + CO2. The protein operates within cofactor biosynthesis; ubiquinone biosynthesis. Functionally, lyase that catalyzes the C1-decarboxylation of 4-hydroxy-3-methoxy-5-(all-trans-polyprenyl)benzoic acid into 2-methoxy-6-(all-trans-polyprenyl)phenol during ubiquinone biosynthesis. This Trypanosoma cruzi (strain CL Brener) protein is Ubiquinone biosynthesis protein COQ4 homolog 2, mitochondrial.